Reading from the N-terminus, the 371-residue chain is Sensor histidine kinase YvfT (371 aa).

The Extracellular segment spans residues M1 to K10. The helical transmembrane segment at E11–L31 threads the bilayer. Over K32–Q38 the chain is Cytoplasmic. A helical membrane pass occupies residues G39–V59. Residues G60–Q71 lie on the Extracellular side of the membrane. Residues M72–F92 form a helical membrane-spanning segment. The Cytoplasmic portion of the chain corresponds to P93 to A109. Residues F110–V130 form a helical membrane-spanning segment. Over S131–L135 the chain is Extracellular. A helical transmembrane segment spans residues F136–F156. Over R157–E371 the chain is Cytoplasmic. The region spanning D187 to K368 is the Histidine kinase domain. H189 is modified (phosphohistidine; by autocatalysis).

The protein localises to the cell membrane. It carries out the reaction ATP + protein L-histidine = ADP + protein N-phospho-L-histidine.. Member of the two-component regulatory system YvfT/YvfU. Probably activates YvfU by phosphorylation. The protein is Sensor histidine kinase YvfT (yvfT) of Bacillus subtilis (strain 168).